The chain runs to 61 residues: Small ribosomal subunit protein uS14B (61 aa).

Residues cysteine 24, cysteine 27, cysteine 40, and cysteine 43 each coordinate Zn(2+).

It belongs to the universal ribosomal protein uS14 family. Zinc-binding uS14 subfamily. As to quaternary structure, part of the 30S ribosomal subunit. Contacts proteins S3 and S10. Zn(2+) serves as cofactor.

Functionally, binds 16S rRNA, required for the assembly of 30S particles and may also be responsible for determining the conformation of the 16S rRNA at the A site. The chain is Small ribosomal subunit protein uS14B from Bacillus licheniformis (strain ATCC 14580 / DSM 13 / JCM 2505 / CCUG 7422 / NBRC 12200 / NCIMB 9375 / NCTC 10341 / NRRL NRS-1264 / Gibson 46).